Here is a 350-residue protein sequence, read N- to C-terminus: C4-dicarboxylate-binding protein DctB (350 aa).

Residues 1–18 (MKSLLACLALMIAGIATA) form the signal peptide.

It belongs to the bacterial solute-binding protein 7 family.

It is found in the secreted. In terms of biological role, part of the binding-protein-dependent transport system for uptake of C4-dicarboxylates. Responsible for growth on fumarate and succinate but not malate. Is not directly involved in C4-dicarboxylate uptake, but plays a sensory role in the DctS/DctR two-component system which regulates the expression of the dctA C4-dicarboxylate transporter. This chain is C4-dicarboxylate-binding protein DctB (dctB), found in Bacillus subtilis (strain 168).